Consider the following 44-residue polypeptide: Benzaldehyde dehydrogenase [NAD(+)] II (44 aa).

It belongs to the aldehyde dehydrogenase family.

The enzyme catalyses benzaldehyde + NAD(+) + H2O = benzoate + NADH + 2 H(+). This is Benzaldehyde dehydrogenase [NAD(+)] II from Acinetobacter guillouiae (Acinetobacter genomosp. 11).